The chain runs to 388 residues: Succinate--CoA ligase [ADP-forming] subunit beta (388 aa).

Residues K9–E244 form the ATP-grasp domain. Residues K46, G53–G55, E99, A102, and E107 contribute to the ATP site. Mg(2+) is bound by residues N199 and D213. Substrate contacts are provided by residues N264 and G321–M323.

The protein belongs to the succinate/malate CoA ligase beta subunit family. Heterotetramer of two alpha and two beta subunits. Mg(2+) serves as cofactor.

It catalyses the reaction succinate + ATP + CoA = succinyl-CoA + ADP + phosphate. The enzyme catalyses GTP + succinate + CoA = succinyl-CoA + GDP + phosphate. It participates in carbohydrate metabolism; tricarboxylic acid cycle; succinate from succinyl-CoA (ligase route): step 1/1. Its function is as follows. Succinyl-CoA synthetase functions in the citric acid cycle (TCA), coupling the hydrolysis of succinyl-CoA to the synthesis of either ATP or GTP and thus represents the only step of substrate-level phosphorylation in the TCA. The beta subunit provides nucleotide specificity of the enzyme and binds the substrate succinate, while the binding sites for coenzyme A and phosphate are found in the alpha subunit. The sequence is that of Succinate--CoA ligase [ADP-forming] subunit beta from Burkholderia lata (strain ATCC 17760 / DSM 23089 / LMG 22485 / NCIMB 9086 / R18194 / 383).